The following is a 447-amino-acid chain: UMP-CMP kinase 2, mitochondrial (447 aa).

The N-terminal 73 residues, 1–73 (MALISRPRAP…ELLGPPGRSY (73 aa)), are a transit peptide targeting the mitochondrion. 259-266 (GLDATGKT) lines the ATP pocket. The stretch at 380-412 (EERVRRLQGRGQEKTKEEAELEANNVFRQKVEM) forms a coiled coil.

The protein belongs to the thymidylate kinase family. In terms of tissue distribution, strongly expressed in the brain.

It is found in the mitochondrion. It catalyses the reaction CMP + ATP = CDP + ADP. The enzyme catalyses dCMP + ATP = dCDP + ADP. The catalysed reaction is a 2'-deoxyribonucleoside 5'-diphosphate + ATP = a 2'-deoxyribonucleoside 5'-triphosphate + ADP. It carries out the reaction a ribonucleoside 5'-diphosphate + ATP = a ribonucleoside 5'-triphosphate + ADP. In terms of biological role, mitochondrial nucleotide monophosphate kinase needed for salvage dNTP synthesis that mediates immunomodulatory and antiviral activities through IFN-dependent and IFN-independent pathways. Restricts the replication of multiple viruses including flaviviruses or coronaviruses. Together with viperin/RSAD2 and ddhCTP, suppresses the replication of several coronaviruses through inhibition of the viral RNA-dependent RNA polymerase activities. Concerning flaviviruses, restricts RNA translation when localized to the mitochondria independently of its kinase activity. Is able to phosphorylate dUMP, dCMP, CMP, UMP and monophosphates of the pyrimidine nucleoside analogs ddC, dFdC, araC, BVDU and FdUrd with ATP as phosphate donor. Efficacy is highest for dUMP followed by dCMP while CMP and UMP are poor substrates. Controls therefore mitochondrial DNA synthesis by supplying required deoxyribonucleotides. CMPK2-dependent mitochondrial DNA synthesis is necessary for the production of oxidized mitochondrial DNA fragments after exposure to NLRP3 activators. In turn, cytosolic oxidized mtDNA associates with the NLRP3 inflammasome complex and is required for its activation. The protein is UMP-CMP kinase 2, mitochondrial (Cmpk2) of Mus musculus (Mouse).